Here is a 678-residue protein sequence, read N- to C-terminus: MEPGGDHRSRSSGGRGGPGPAVASARGRRLPPAGSSGSAEPEEDEGGQDLQLEGGALGSWGSAPLPSSRARGPASSGRKYSDHCEARASRPGKSRIPGRDHRRYYHDHWRLEYLMDFNPARHGMVCMVCGSSLATLKLSTIKRHIRQKHPYSLHWSPREKEVISNSWDAHLGLGACGEAEGLGVQGAEEEEEEEEEEEEEGAGVPACPPKGPGKAPAGGGCRRQRRGGPVAPRARRLRLSASRRAGGSRGLGARRLERRLKESLQNWFRAECLMDYDPRGNRLVCMACGRALPSLHLDDIRAHVLEVHPGSLGLSGPQRSALLQAWGGQPEALSELTQSPPGDDLAPQDLTGKSRDSASAAGAPSSQDLSPPDVKEEAGWVPERPGPAEEEEELEEGEGERAGVPGRSPRGRAHRRHPQERWRLEYLMELDGGRRGLVCGVCGGALASLKMSTIERHIRRRHPGSTRLGGPVQALIAREWSEKAAHLLALGPPRPESPQGPIPPGTAAASDEGGGDEEEEPEEEEEEWGDVPLSPGAPLERPAEEEEDEEDGQEPGGLALPPPPPPPPPPPPRSREQRRNYQPRWRGEYLMDYDGSRRGLVCMVCGGALATLKVSTIKRHILQVHPFSMDFTPEERQTILEAYEEAALRCYGHEGFGPPAPAPRDGGADLKSGAVCRA.

4 disordered regions span residues 1–100 (MEPG…PGRD), 182–250 (LGVQ…GSRG), 329–417 (QPEA…HRRH), and 490–583 (LGPP…NYQP). A compositionally biased stretch (low complexity) spans 62 to 78 (SAPLPSSRARGPASSGR). Over residues 79–88 (KYSDHCEARA) the composition is skewed to basic and acidic residues. The segment covering 187–201 (AEEEEEEEEEEEEEG) has biased composition (acidic residues). Lysine 375 is covalently cross-linked (Glycyl lysine isopeptide (Lys-Gly) (interchain with G-Cter in SUMO2)). Positions 388 to 398 (AEEEEELEEGE) are enriched in acidic residues. Positions 492–504 (PPRPESPQGPIPP) are enriched in pro residues. 2 stretches are compositionally biased toward acidic residues: residues 513-529 (GGGD…EEWG) and 543-553 (AEEEEDEEDGQ). Residues 560–572 (LPPPPPPPPPPPP) show a composition bias toward pro residues. A compositionally biased stretch (basic and acidic residues) spans 573–583 (RSREQRRNYQP).

The chain is Zinc finger translocation-associated protein from Homo sapiens (Human).